Reading from the N-terminus, the 163-residue chain is Periplasmic nitrate reductase, electron transfer subunit (163 aa).

Residues methionine 1–alanine 32 form the signal peptide. Histidine 76, cysteine 90, cysteine 93, histidine 94, histidine 111, cysteine 130, cysteine 133, and histidine 134 together coordinate heme c.

Belongs to the NapB family. As to quaternary structure, component of the periplasmic nitrate reductase NapAB complex composed of NapA and NapB. Post-translationally, binds 2 heme C groups per subunit.

It is found in the periplasm. Electron transfer subunit of the periplasmic nitrate reductase complex NapAB. Receives electrons from the membrane-anchored tetraheme c-type NapC protein and transfers these to NapA subunit, thus allowing electron flow between membrane and periplasm. Essential for periplasmic nitrate reduction with nitrate as the terminal electron acceptor. The chain is Periplasmic nitrate reductase, electron transfer subunit from Neorhizobium galegae (Rhizobium galegae).